A 398-amino-acid chain; its full sequence is Serpin-Z2A (398 aa).

Residues 343-367 (GTEAAAATIAKAVLLSASPPSDMDF) form an RCL region.

It belongs to the serpin family.

Its function is as follows. Inhibits chymotrypsin and cathepsin G in vitro. This is Serpin-Z2A from Triticum aestivum (Wheat).